Here is a 689-residue protein sequence, read N- to C-terminus: Glycine--tRNA ligase beta subunit (689 aa).

This sequence belongs to the class-II aminoacyl-tRNA synthetase family. In terms of assembly, tetramer of two alpha and two beta subunits.

The protein localises to the cytoplasm. It carries out the reaction tRNA(Gly) + glycine + ATP = glycyl-tRNA(Gly) + AMP + diphosphate. The sequence is that of Glycine--tRNA ligase beta subunit from Shewanella woodyi (strain ATCC 51908 / MS32).